A 403-amino-acid chain; its full sequence is Argininosuccinate synthase (403 aa).

ATP is bound by residues 10 to 18 (AYSGGLDTS) and alanine 37. 2 residues coordinate L-citrulline: tyrosine 88 and serine 93. Residue glycine 118 participates in ATP binding. Threonine 120, asparagine 124, and aspartate 125 together coordinate L-aspartate. Asparagine 124 provides a ligand contact to L-citrulline. L-citrulline-binding residues include arginine 128, serine 178, serine 187, glutamate 263, and tyrosine 275.

Belongs to the argininosuccinate synthase family. Type 1 subfamily. As to quaternary structure, homotetramer.

Its subcellular location is the cytoplasm. The enzyme catalyses L-citrulline + L-aspartate + ATP = 2-(N(omega)-L-arginino)succinate + AMP + diphosphate + H(+). Its pathway is amino-acid biosynthesis; L-arginine biosynthesis; L-arginine from L-ornithine and carbamoyl phosphate: step 2/3. The chain is Argininosuccinate synthase from Marinobacter nauticus (strain ATCC 700491 / DSM 11845 / VT8) (Marinobacter aquaeolei).